A 156-amino-acid polypeptide reads, in one-letter code: Small ribosomal subunit protein uS7 (156 aa).

This sequence belongs to the universal ribosomal protein uS7 family. In terms of assembly, part of the 30S ribosomal subunit. Contacts proteins S9 and S11.

Functionally, one of the primary rRNA binding proteins, it binds directly to 16S rRNA where it nucleates assembly of the head domain of the 30S subunit. Is located at the subunit interface close to the decoding center, probably blocks exit of the E-site tRNA. The protein is Small ribosomal subunit protein uS7 of Vibrio vulnificus (strain CMCP6).